A 359-amino-acid chain; its full sequence is UDP-N-acetylglucosamine--N-acetylmuramyl-(pentapeptide) pyrophosphoryl-undecaprenol N-acetylglucosamine transferase (359 aa).

UDP-N-acetyl-alpha-D-glucosamine contacts are provided by residues 15–17 (SGG), Asn-127, Arg-164, Ser-192, Ile-246, 265–270 (ALTVSE), and Gln-290.

It belongs to the glycosyltransferase 28 family. MurG subfamily.

Its subcellular location is the cell membrane. It catalyses the reaction di-trans,octa-cis-undecaprenyl diphospho-N-acetyl-alpha-D-muramoyl-L-alanyl-D-glutamyl-meso-2,6-diaminopimeloyl-D-alanyl-D-alanine + UDP-N-acetyl-alpha-D-glucosamine = di-trans,octa-cis-undecaprenyl diphospho-[N-acetyl-alpha-D-glucosaminyl-(1-&gt;4)]-N-acetyl-alpha-D-muramoyl-L-alanyl-D-glutamyl-meso-2,6-diaminopimeloyl-D-alanyl-D-alanine + UDP + H(+). It participates in cell wall biogenesis; peptidoglycan biosynthesis. In terms of biological role, cell wall formation. Catalyzes the transfer of a GlcNAc subunit on undecaprenyl-pyrophosphoryl-MurNAc-pentapeptide (lipid intermediate I) to form undecaprenyl-pyrophosphoryl-MurNAc-(pentapeptide)GlcNAc (lipid intermediate II). The protein is UDP-N-acetylglucosamine--N-acetylmuramyl-(pentapeptide) pyrophosphoryl-undecaprenol N-acetylglucosamine transferase of Wigglesworthia glossinidia brevipalpis.